The chain runs to 73 residues: SVIKVPLKKLKSIRQAMKEKGLLEEFLKTHKYDPAQRYRIGDISVALEPMAYLEAAYFGEISIGTPPQNFLVL.

The propeptide at 1–43 (SVIKVPLKKLKSIRQAMKEKGLLEEFLKTHKYDPAQRYRIGDI) is activation peptide. Residues 57–73 (YFGEISIGTPPQNFLVL) enclose the Peptidase A1 domain.

Belongs to the peptidase A1 family.

The protein localises to the secreted. It catalyses the reaction More restricted specificity than pepsin A, but shows preferential cleavage at Tyr-|-Xaa bonds. High activity on hemoglobin.. Functionally, hydrolyzes a variety of proteins. The protein is Gastricsin (PGC) of Sus scrofa (Pig).